Consider the following 999-residue polypeptide: Collagen alpha-1(I) chain (999 aa).

The tract at residues 1-999 is disordered; sequence SYGYDEKSAG…PGPPGPPGPP (999 aa). Residue Lys7 is modified to Allysine. At Ser8 the chain carries Phosphoserine. 11 positions are modified to 4-hydroxyproline: Pro27, Pro30, Pro33, Pro42, Pro45, Pro48, Pro62, Pro77, Pro83, Pro92, and Pro98. Over residues 65–79 the composition is skewed to basic and acidic residues; that stretch reads NGDDGEAGKPGRPGE. At Lys101 the chain carries 5-hydroxylysine; alternate. Lys101 carries O-linked (Gal...) hydroxylysine; alternate glycosylation. At Ser107 the chain carries Phosphoserine. Positions 115–131 are enriched in low complexity; that stretch reads DAGPAGPKGEPGSPGEN. 4-hydroxyproline is present on residues Pro125, Pro128, Pro134, Pro143, Pro149, Pro170, Pro179, Pro182, Pro209, Pro212, Pro224, Pro230, Pro239, Pro245, Pro248, and Pro263. The segment covering 149-167 has biased composition (low complexity); it reads PGASGPAGARGNDGATGAA. Residues 169-181 are compositionally biased toward pro residues; it reads PPGPTGPAGPPGF. The span at 215–254 shows a compositional bias: low complexity; sequence AGAAGPAGNPGADGQPGAKGANGAPGIAGAPGFPGARGPS. Position 266 is a 5-hydroxylysine (Lys266). A 4-hydroxyproline mark is found at Pro272, Pro275, Pro287, Pro296, Pro311, Pro317, Pro326, and Pro332. Positions 321–330 are enriched in gly residues; it reads GERGGPGSRG. A 5-hydroxylysine modification is found at Lys341. Residues Pro350, Pro359, Pro365, Pro371, Pro380, Pro383, Pro392, Pro401, Pro407, Pro419, Pro429, Pro432, Pro450, Pro468, Pro474, Pro480, Pro486, Pro492, Pro498, Pro510, Pro526, Pro532, Pro538, and Pro547 each carry the 4-hydroxyproline modification. Over residues 374–400 the composition is skewed to low complexity; it reads KGLTGSPGSPGPDGKTGPPGPAGQDGR. Low complexity predominate over residues 462 to 489; that stretch reads QGPAGSPGFQGLPGPAGPPGEAGKPGEQ. The span at 522-535 shows a compositional bias: low complexity; sequence APGAPGSQGAPGLQ. Position 559 is a 5-hydroxylysine (Lys559). 4-hydroxyproline is present on residues Pro565, Pro580, and Pro586. Over residues 592–606 the composition is skewed to low complexity; that stretch reads SGPSGPAGPTGARGA. Ser595 carries the phosphoserine modification. A 4-hydroxyproline mark is found at Pro607, Pro613, Pro616, Pro625, Pro631, Pro649, Pro658, and Pro667. A compositionally biased stretch (low complexity) spans 619 to 646; the sequence is AGFAGPPGADGQPGAKGEPGDAGAKGDA. The span at 648–660 shows a compositional bias: pro residues; the sequence is PPGPAGPTGPPGP. Position 670 is a 5-hydroxylysine (Lys670). Residues 675 to 691 show a composition bias toward low complexity; that stretch reads SAGPPGATGFPGAAGRV. Residues Pro679 and Pro685 each carry the 4-hydroxyproline modification. Pro693 carries the 3-hydroxyproline modification. 4-hydroxyproline is present on residues Pro694, Pro703, Pro706, Pro727, Pro736, Pro745, Pro754, Pro772, Pro781, Pro784, Pro790, Pro805, Pro811, Pro817, Pro826, and Pro832. Low complexity predominate over residues 720–729; sequence ETGPAGRPGE. Low complexity predominate over residues 739–754; sequence SGEKGSPGADGPAGAP. A compositionally biased stretch (pro residues) spans 804-814; that stretch reads PPGPVGPPGLA. A compositionally biased stretch (low complexity) spans 816–831; sequence PPGESGREGSPGAEGS. Lys841 bears the 5-hydroxylysine mark. Positions 849-864 are enriched in pro residues; sequence PGPPGAPGAPGAPGPV. 3 positions are modified to 4-hydroxyproline: Pro852, Pro855, and Pro858. The segment covering 885 to 899 has biased composition (low complexity); sequence AGPAGARGPAGPQGP. Basic and acidic residues predominate over residues 900–914; that stretch reads RGDKGETGEQGDRGI. Lys903 bears the 5-hydroxylysine mark. Position 915 is a 5-hydroxylysine; alternate (Lys915). Residue Lys915 is glycosylated (O-linked (Gal...) hydroxylysine; alternate). 4 positions are modified to 4-hydroxyproline: Pro930, Pro933, Pro951, and Pro966. Positions 933–966 are enriched in low complexity; the sequence is PGEQGPSGASGPAGPRGPPGSAGSPGKDGLNGLP. Residue Pro971 is modified to 3-hydroxyproline. Pro972 bears the 4-hydroxyproline mark. The segment covering 984–999 has biased composition (pro residues); it reads VGPPGPPGPPGPPGPP. Pro986 is modified (3-hydroxyproline). Position 987 is a 4-hydroxyproline (Pro987). The residue at position 989 (Pro989) is a 3-hydroxyproline. A 4-hydroxyproline modification is found at Pro990. Residue Pro992 is modified to 3-hydroxyproline. Pro993, Pro996, and Pro999 each carry 4-hydroxyproline.

Belongs to the fibrillar collagen family. As to quaternary structure, trimers of one alpha 2(I) and two alpha 1(I) chains. In terms of processing, contains mostly 4-hydroxyproline. Proline residues at the third position of the tripeptide repeating unit (G-X-Y) are hydroxylated in some or all of the chains. Post-translationally, contains 3-hydroxyproline at a few sites. This modification occurs on the first proline residue in the sequence motif Gly-Pro-Hyp, where Hyp is 4-hydroxyproline. Lysine residues at the third position of the tripeptide repeating unit (G-X-Y) are 5-hydroxylated in some or all of the chains. In terms of processing, O-glycosylated on hydroxylated lysine residues. The O-linked glycan consists of a Glc-Gal disaccharide. In terms of tissue distribution, expressed in bones.

The protein resides in the secreted. It is found in the extracellular space. The protein localises to the extracellular matrix. Functionally, type I collagen is a member of group I collagen (fibrillar forming collagen). In Choloepus hoffmanni (Hoffmann's two-fingered sloth), this protein is Collagen alpha-1(I) chain.